A 380-amino-acid chain; its full sequence is Cytochrome b (380 aa).

Transmembrane regions (helical) follow at residues 33–53 (FGSLLGLCLVTQILTGLFLAM), 77–98 (WLIRNIHANGASFFFICLYLHI), 113–133 (WNIGVVLFLLVMMTAFVGYVL), and 178–198 (FFAFHFLFPFIIVALTVLHFF). 2 residues coordinate heme b: histidine 83 and histidine 97. Heme b-binding residues include histidine 182 and histidine 196. Histidine 201 is a binding site for a ubiquinone. 4 helical membrane passes run 226–246 (YKDLFGLVLLLLALSSLSFFS), 288–308 (LGGVLALLASILILMLVPILH), 320–340 (LTQLLFWILVADVMILTWIGG), and 347–367 (FIAVGQIASVLYFTLFLILIP).

This sequence belongs to the cytochrome b family. As to quaternary structure, the cytochrome bc1 complex contains 3 respiratory subunits (MT-CYB, CYC1 and UQCRFS1), 2 core proteins (UQCRC1 and UQCRC2) and probably 6 low-molecular weight proteins. The cofactor is heme b.

The protein resides in the mitochondrion inner membrane. In terms of biological role, component of the ubiquinol-cytochrome c reductase complex (complex III or cytochrome b-c1 complex) that is part of the mitochondrial respiratory chain. The b-c1 complex mediates electron transfer from ubiquinol to cytochrome c. Contributes to the generation of a proton gradient across the mitochondrial membrane that is then used for ATP synthesis. The chain is Cytochrome b (mt-cyb) from Zenopsis nebulosa (Mirror dory).